The following is a 138-amino-acid chain: Acidic phospholipase A2 beta (138 aa).

The N-terminal stretch at 1–16 (MRTLWIVAVLLLGVEG) is a signal peptide. Cystine bridges form between Cys-42–Cys-131, Cys-44–Cys-60, Cys-59–Cys-111, Cys-65–Cys-138, Cys-66–Cys-104, Cys-73–Cys-97, and Cys-91–Cys-102. Positions 43, 45, and 47 each coordinate Ca(2+). His-63 is an active-site residue. Asp-64 lines the Ca(2+) pocket. The active site involves Asp-105.

Belongs to the phospholipase A2 family. Group II subfamily. D49 sub-subfamily. Dimer. Requires Ca(2+) as cofactor. Expressed by the venom gland.

The protein resides in the secreted. The enzyme catalyses a 1,2-diacyl-sn-glycero-3-phosphocholine + H2O = a 1-acyl-sn-glycero-3-phosphocholine + a fatty acid + H(+). In terms of biological role, PLA2 catalyzes the calcium-dependent hydrolysis of the 2-acyl groups in 3-sn-phosphoglycerides. This Crotalus adamanteus (Eastern diamondback rattlesnake) protein is Acidic phospholipase A2 beta.